The chain runs to 950 residues: MRLFSLLPLLALLVVQAAGQSEVTSDDPATDAGSTTNSTTDTKPRIPSQDEILGQMPSINPIRTGNPQMDAFYMMFPALGSLLKWGSLFPAYSILGAIPDNLQPTAAASKVVLVLADDATAKTRVARQNPPPNPLGQLMNWPALPQDFQLPSMDLGPQVGSFLAQLPAMPTVPGLLGAAAPVPAPAPAPAAAPPPAPAPAADPPAAPVPDAPQPAILGQAALQNAFTFFNPANFDASSLLGQSVPTFAPPNLDFVAQMQRQFFPGMTPAQPAAAGTDAQASDISEVRVRPEDPYSQEAQMKIKSALEMEQERQQQAQVKDQEQVPLLWFRMPTTQNQDATEEKTLEDLRVEAKLRAFERQVIAELRMLQKIELMAKQMRSSAAAQNGDSPYRISYPLSRTPIHKITRADIEQALRDDYVRRLVNKEAQRRARNSGINTQKANALKRQAKSQDQTLSKEDIVQIMAYAYRMANEQMESEKGKQDKVYAAYRTEQNPMMMQQRQWSEEQAKIQQNQQQIQQNPMMMQQRQWSEEQAKIQQNQQQIQQNPMMMQQRQWSEEQAKIQQNQQQIQQNPMMMQQRQWSEEQAKIQQNQQQIQQNPMMVQQRQWSEEQAKIQQNQQQIQQNPMMMQQRQWSEEQAKIQHDQQMAQQMAQQGLMMTEQRQRQWSEDQAKIQQAQQMAQQTPMMMPQMQQRQWTEDPQMVQQMQQRQWAEDQTRMQMAQQNPMMQQQRQMAENPQMMQQRQWSEEQTKIEQAQQMAQQNQMMMQQMQQRQWSEDQAQIQQQQRQMMQQTPMMMKERQWAEENPQSVQQQGPMMMQQQMPSMMQREVEDEDNKAEDDLVGEAGPQMPENEGTARHKVDALGVGGNKRKKSKSKSAPPTVINYYYAAPQRPVVQSYGTSYGGGGYGSNAYGVPRPVNSYQSQGYRAAVGNDEVDEMLRQHQTMARATHFRQ.

The N-terminal stretch at 1–19 (MRLFSLLPLLALLVVQAAG) is a signal peptide. Disordered stretches follow at residues 23–60 (VTSD…PSIN), 184–212 (APAP…PDAP), and 268–294 (PAQP…EDPY). Over residues 32 to 41 (AGSTTNSTTD) the composition is skewed to polar residues. A compositionally biased stretch (low complexity) spans 268–280 (PAQPAAAGTDAQA). 5 consecutive repeat copies span residues 493 to 518 (QNPM…QQIQ), 519 to 544 (QNPM…QQIQ), 545 to 570 (QNPM…QQIQ), 571 to 596 (QNPM…QQIQ), and 597 to 622 (QNPM…QQIQ). The segment at 493–788 (QNPMMMQQRQ…IQQQQRQMMQ (296 aa)) is 12 X 26 AA approximate tandem repeats, Glu, Met-rich. A 6; approximate repeat occupies 623-652 (QNPMMMQQRQWSEEQAKIQHDQQMAQQMAQ). The stretch at 653–680 (QGLMMTEQRQRQWSEDQAKIQQAQQMAQ) is one 7; approximate repeat. The stretch at 681-696 (QTPMMMPQMQQRQWTE) is one 8; approximate repeat. The stretch at 697–720 (DPQMVQQMQQRQWAEDQTRMQMAQ) is one 9; approximate repeat. The stretch at 721-733 (QNPMMQQQRQMAE) is one 10; approximate repeat. The 11; approximate repeat unit spans residues 734–758 (NPQMMQQRQWSEEQTKIEQAQQMAQ). The stretch at 759 to 788 (QNQMMMQQMQQRQWSEDQAQIQQQQRQMMQ) is one 12; approximate repeat. Residues 843 to 875 (GPQMPENEGTARHKVDALGVGGNKRKKSKSKSA) are disordered.

Post-translationally, proteolytic cleavage of isoform FC106 generates 2 further products, S80 and S60.

It is found in the secreted. In terms of biological role, required for proper assembly of the eggshell. The sequence is that of Defective chorion protein, FC106 isoform from Drosophila melanogaster (Fruit fly).